Here is a 126-residue protein sequence, read N- to C-terminus: Fluoride-specific ion channel FluC 1 (126 aa).

3 consecutive transmembrane segments (helical) span residues 37 to 57 (HWGT…VLAL), 67 to 87 (IALL…TFVV), and 98 to 118 (LLAA…AAAA). Na(+)-binding residues include Gly-77 and Ser-80.

It belongs to the fluoride channel Fluc/FEX (TC 1.A.43) family.

It is found in the cell inner membrane. The catalysed reaction is fluoride(in) = fluoride(out). Its activity is regulated as follows. Na(+) is not transported, but it plays an essential structural role and its presence is essential for fluoride channel function. In terms of biological role, fluoride-specific ion channel. Important for reducing fluoride concentration in the cell, thus reducing its toxicity. The chain is Fluoride-specific ion channel FluC 1 from Parasynechococcus marenigrum (strain WH8102).